The sequence spans 471 residues: Ribonuclease 3 (471 aa).

Residues 1–10 (MGSKVAGKKK) show a composition bias toward basic residues. 2 disordered regions span residues 1–29 (MGSK…RENI) and 168–189 (NLNE…PTKA). Positions 20-29 (ENGSQQRENI) are enriched in polar residues. A compositionally biased stretch (acidic residues) spans 172–184 (KEDEEEDEGEDSY). In terms of domain architecture, RNase III spans 227-331 (LSGSEMINAH…YIGGLMEDDP (105 aa)). Residues 369 to 437 (NAKRQLYSLI…AENALRDKKM (69 aa)) form the DRBM domain. The disordered stretch occupies residues 451–471 (SESVLKDPSQKNKKRKFSDTS). Residues 461–471 (KNKKRKFSDTS) are compositionally biased toward basic residues.

It carries out the reaction Endonucleolytic cleavage to 5'-phosphomonoester.. DsRNA-specific nuclease that cleaves eukaryotic pre-ribosomal RNA at the U3 snoRNP-dependent A0 site in the 5'-external transcribed spacer (ETS) and in the 3'-ETS. In vitro, cleaves synthetic 5'-ETS RNA A0 site in the absence of snoRNA or other factors. Has an essential growth function in addition to pre-rRNA processing. The protein is Ribonuclease 3 (RNT1) of Saccharomyces cerevisiae (strain ATCC 204508 / S288c) (Baker's yeast).